A 377-amino-acid chain; its full sequence is DNA-directed RNA polymerase subunit alpha (377 aa).

The alpha N-terminal domain (alpha-NTD) stretch occupies residues 1–259; the sequence is MSDSSHNLLY…KHFSVFEKMD (259 aa). Residues 276-377 form an alpha C-terminal domain (alpha-CTD) region; it reads KDDILHKLVL…KIRLSKNTKG (102 aa).

It belongs to the RNA polymerase alpha chain family. In terms of assembly, homodimer. The RNAP catalytic core consists of 2 alpha, 1 beta, 1 beta' and 1 omega subunit. When a sigma factor is associated with the core the holoenzyme is formed, which can initiate transcription.

It catalyses the reaction RNA(n) + a ribonucleoside 5'-triphosphate = RNA(n+1) + diphosphate. Functionally, DNA-dependent RNA polymerase catalyzes the transcription of DNA into RNA using the four ribonucleoside triphosphates as substrates. In Chlamydia trachomatis serovar A (strain ATCC VR-571B / DSM 19440 / HAR-13), this protein is DNA-directed RNA polymerase subunit alpha.